The sequence spans 275 residues: COP9 signalosome complex subunit 7a (275 aa).

At serine 2 the chain carries N-acetylserine. A PCI domain is found at 2–159 (SAEVKVTGQN…QRLEVDYSIG (158 aa)). The stretch at 185–233 (LSGIEEQVSRANQHKEQQLGLKQQIESEVANLKKTIKVTTAAAAAATSQ) forms a coiled coil. Residues 227–275 (AAAATSQDPEQHLTELREPAPGTNQRQPSKKASKGKGLRGSAKIWSKSN) are disordered. Positions 235-244 (PEQHLTELRE) are enriched in basic and acidic residues. Over residues 254–263 (PSKKASKGKG) the composition is skewed to basic residues.

The protein belongs to the CSN7/EIF3M family. CSN7 subfamily. In terms of assembly, component of the CSN complex, composed of COPS1/GPS1, COPS2, COPS3, COPS4, COPS5, COPS6, COPS7 (COPS7A or COPS7B), COPS8 and COPS9. In the complex, it probably interacts directly with COPS1, COPS2, COPS4, COPS5, COPS6 and COPS8. Interacts with PMF1. Interacts with the translation initiation factor EIF3S6. Interacts with CK2 and PKD. Interacts directly with ID3. Post-translationally, phosphorylated by CK2 and PKD kinases.

The protein resides in the cytoplasm. It is found in the nucleus. Its function is as follows. Component of the COP9 signalosome complex (CSN), a complex involved in various cellular and developmental processes. The CSN complex is an essential regulator of the ubiquitin (Ubl) conjugation pathway by mediating the deneddylation of the cullin subunits of SCF-type E3 ligase complexes, leading to decrease the Ubl ligase activity of SCF-type complexes such as SCF, CSA or DDB2. The complex is also involved in phosphorylation of p53/TP53, JUN, I-kappa-B-alpha/NFKBIA, ITPK1 and IRF8/ICSBP, possibly via its association with CK2 and PKD kinases. CSN-dependent phosphorylation of TP53 and JUN promotes and protects degradation by the Ubl system, respectively. The chain is COP9 signalosome complex subunit 7a (COPS7A) from Pongo abelii (Sumatran orangutan).